We begin with the raw amino-acid sequence, 570 residues long: Glutamate--tRNA ligase, chloroplastic/mitochondrial (570 aa).

The N-terminal 39 residues, 1–39 (MASLVYGTPWLRVRSLPELAPAFLRRRQSSLFYCSRRSF), are a transit peptide targeting the chloroplast and mitochondrion. Residue 57–59 (RFA) coordinates L-glutamate. A 'HIGH' region motif is present at residues 60-70 (PSPTGNLHVGG). His-67 contacts ATP. Residues Glu-93, 245–249 (YNFCV), and Arg-263 contribute to the L-glutamate site. Residues Glu-266 and 301-305 (KLSKR) contribute to the ATP site. The short motif at 301–305 (KLSKR) is the 'KMSKS' region element.

It belongs to the class-I aminoacyl-tRNA synthetase family. Glutamate--tRNA ligase type 1 subfamily.

The protein localises to the plastid. Its subcellular location is the chloroplast. It is found in the mitochondrion. It carries out the reaction tRNA(Glu) + L-glutamate + ATP = L-glutamyl-tRNA(Glu) + AMP + diphosphate. Its function is as follows. Catalyzes the attachment of glutamate to tRNA(Glu) in a two-step reaction: glutamate is first activated by ATP to form Glu-AMP and then transferred to the acceptor end of tRNA(Glu). The protein is Glutamate--tRNA ligase, chloroplastic/mitochondrial of Arabidopsis thaliana (Mouse-ear cress).